A 1131-amino-acid chain; its full sequence is Phytochrome (1131 aa).

Residues M1–K30 form a disordered region. Over residues Q9–N29 the composition is skewed to low complexity. One can recognise a GAF domain in the interval D227 to L406. A phytochromobilin-binding site is contributed by C332. PAS domains follow at residues V621–E692 and D755–L826. In terms of domain architecture, Histidine kinase spans Y903 to Q1123.

Belongs to the phytochrome family. In terms of assembly, homodimer. In terms of processing, contains one covalently linked phytochromobilin chromophore.

Regulatory photoreceptor which exists in two forms that are reversibly interconvertible by light: the Pr form that absorbs maximally in the red region of the spectrum and the Pfr form that absorbs maximally in the far-red region. Photoconversion of Pr to Pfr induces an array of morphogenic responses, whereas reconversion of Pfr to Pr cancels the induction of those responses. Pfr controls the expression of a number of nuclear genes including those encoding the small subunit of ribulose-bisphosphate carboxylase, chlorophyll A/B binding protein, protochlorophyllide reductase, rRNA, etc. It also controls the expression of its own gene(s) in a negative feedback fashion. The polypeptide is Phytochrome (Pinus sylvestris (Scotch pine)).